The following is a 726-amino-acid chain: Replication restart protein PriA (726 aa).

Isoleucine 234 is a binding site for ATP. Residues 234 to 373 (IQSVLYKGVQ…LHRKCFYIKL (140 aa)) enclose the Helicase ATP-binding domain. Residues 316 to 319 (LEEH) carry the DEAH box motif. Zn(2+) contacts are provided by cysteine 431, cysteine 434, cysteine 440, cysteine 443, cysteine 458, cysteine 461, cysteine 471, and cysteine 474.

It belongs to the helicase family. PriA subfamily. In terms of assembly, component of the replication restart primosome. Requires Zn(2+) as cofactor.

It carries out the reaction Couples ATP hydrolysis with the unwinding of duplex DNA by translocating in the 3'-5' direction.. It catalyses the reaction ATP + H2O = ADP + phosphate + H(+). Functionally, initiates the restart of stalled replication forks, which reloads the replicative helicase on sites other than the origin of replication. Recognizes and binds to abandoned replication forks and remodels them to uncover a helicase loading site. Promotes assembly of the primosome at these replication forks. This chain is Replication restart protein PriA, found in Buchnera aphidicola subsp. Acyrthosiphon pisum (strain APS) (Acyrthosiphon pisum symbiotic bacterium).